A 319-amino-acid polypeptide reads, in one-letter code: 7-methylguanosine phosphate-specific 5'-nucleotidase (319 aa).

The active-site Nucleophile is D55. D55 and D57 together coordinate Mg(2+). Residue D57 is the Proton donor of the active site. CMP is bound at residue E103. The N(7)-methyl-GMP site is built by E103 and S124. A substrate-binding site is contributed by 171 to 172 (SA). D245 serves as a coordination point for Mg(2+).

It belongs to the pyrimidine 5'-nucleotidase family. In terms of assembly, monomer. The cofactor is Mg(2+).

It catalyses the reaction N(7)-methyl-GMP + H2O = N(7)-methylguanosine + phosphate. The enzyme catalyses CMP + H2O = cytidine + phosphate. It carries out the reaction a ribonucleoside 5'-phosphate + H2O = a ribonucleoside + phosphate. Its activity is regulated as follows. Inhibited by high levels of AMP. Specifically hydrolyzes 7-methylguanosine monophosphate (m(7)GMP) to 7-methylguanosine and inorganic phosphate. Also able to mediate hydrolysis of diphosphate (m(7)GDP) to 7-methylguanosine and 2 inorganic phosphate with lower activity. The specific activity for m(7)GMP may protect cells against undesired salvage of m(7)GMP and its incorporation into nucleic acids. Also has weak activity for CMP. UMP and purine nucleotides are poor substrates. This Drosophila melanogaster (Fruit fly) protein is 7-methylguanosine phosphate-specific 5'-nucleotidase.